The following is a 159-amino-acid chain: uncharacterized protein (159 aa).

In terms of domain architecture, N-acetyltransferase spans Met1–Pro139.

This is an uncharacterized protein from Bacillus subtilis (strain 168).